The following is a 488-amino-acid chain: Alpha-ketoglutaric semialdehyde dehydrogenase (488 aa).

NAD(+) contacts are provided by residues K180 and 233 to 238 (GSNQVG). E255 serves as the catalytic Proton acceptor. Catalysis depends on C289, which acts as the Nucleophile. NAD(+) contacts are provided by Q336 and E390.

Belongs to the aldehyde dehydrogenase family. As to quaternary structure, homotetramer.

The enzyme catalyses 2,5-dioxopentanoate + NADP(+) + H2O = 2-oxoglutarate + NADPH + 2 H(+). It carries out the reaction 2,5-dioxopentanoate + NAD(+) + H2O = 2-oxoglutarate + NADH + 2 H(+). Functionally, catalyzes the NAD(P)(+)-dependent oxidation of alpha-ketoglutaric semialdehyde (alphaKGSA) to alpha-ketoglutarate. Prefers NADP(+) to NAD(+) as a cosubstrate. In vitro, can also use various aldehydes. This is Alpha-ketoglutaric semialdehyde dehydrogenase from Bacillus subtilis (strain 168).